A 165-amino-acid polypeptide reads, in one-letter code: Crossover junction endodeoxyribonuclease RuvC (165 aa).

Residues Asp7, Glu66, and Asp138 contribute to the active site. 3 residues coordinate Mg(2+): Asp7, Glu66, and Asp138.

This sequence belongs to the RuvC family. As to quaternary structure, homodimer which binds Holliday junction (HJ) DNA. The HJ becomes 2-fold symmetrical on binding to RuvC with unstacked arms; it has a different conformation from HJ DNA in complex with RuvA. In the full resolvosome a probable DNA-RuvA(4)-RuvB(12)-RuvC(2) complex forms which resolves the HJ. It depends on Mg(2+) as a cofactor.

It localises to the cytoplasm. It catalyses the reaction Endonucleolytic cleavage at a junction such as a reciprocal single-stranded crossover between two homologous DNA duplexes (Holliday junction).. Functionally, the RuvA-RuvB-RuvC complex processes Holliday junction (HJ) DNA during genetic recombination and DNA repair. Endonuclease that resolves HJ intermediates. Cleaves cruciform DNA by making single-stranded nicks across the HJ at symmetrical positions within the homologous arms, yielding a 5'-phosphate and a 3'-hydroxyl group; requires a central core of homology in the junction. The consensus cleavage sequence is 5'-(A/T)TT(C/G)-3'. Cleavage occurs on the 3'-side of the TT dinucleotide at the point of strand exchange. HJ branch migration catalyzed by RuvA-RuvB allows RuvC to scan DNA until it finds its consensus sequence, where it cleaves and resolves the cruciform DNA. This Ruegeria pomeroyi (strain ATCC 700808 / DSM 15171 / DSS-3) (Silicibacter pomeroyi) protein is Crossover junction endodeoxyribonuclease RuvC.